We begin with the raw amino-acid sequence, 363 residues long: S-adenosylmethionine:tRNA ribosyltransferase-isomerase (363 aa).

This sequence belongs to the QueA family. As to quaternary structure, monomer.

It localises to the cytoplasm. It catalyses the reaction 7-aminomethyl-7-carbaguanosine(34) in tRNA + S-adenosyl-L-methionine = epoxyqueuosine(34) in tRNA + adenine + L-methionine + 2 H(+). The protein operates within tRNA modification; tRNA-queuosine biosynthesis. In terms of biological role, transfers and isomerizes the ribose moiety from AdoMet to the 7-aminomethyl group of 7-deazaguanine (preQ1-tRNA) to give epoxyqueuosine (oQ-tRNA). The chain is S-adenosylmethionine:tRNA ribosyltransferase-isomerase from Pasteurella multocida (strain Pm70).